Reading from the N-terminus, the 527-residue chain is Bifunctional purine biosynthesis protein PurH (527 aa).

The region spanning 1–149 is the MGS-like domain; sequence MASDFLPVRR…KNFARVAVAT (149 aa).

The protein belongs to the PurH family.

It catalyses the reaction (6R)-10-formyltetrahydrofolate + 5-amino-1-(5-phospho-beta-D-ribosyl)imidazole-4-carboxamide = 5-formamido-1-(5-phospho-D-ribosyl)imidazole-4-carboxamide + (6S)-5,6,7,8-tetrahydrofolate. The catalysed reaction is IMP + H2O = 5-formamido-1-(5-phospho-D-ribosyl)imidazole-4-carboxamide. The protein operates within purine metabolism; IMP biosynthesis via de novo pathway; 5-formamido-1-(5-phospho-D-ribosyl)imidazole-4-carboxamide from 5-amino-1-(5-phospho-D-ribosyl)imidazole-4-carboxamide (10-formyl THF route): step 1/1. It functions in the pathway purine metabolism; IMP biosynthesis via de novo pathway; IMP from 5-formamido-1-(5-phospho-D-ribosyl)imidazole-4-carboxamide: step 1/1. The sequence is that of Bifunctional purine biosynthesis protein PurH from Xanthomonas oryzae pv. oryzae (strain KACC10331 / KXO85).